Here is a 214-residue protein sequence, read N- to C-terminus: Thymidylate kinase (214 aa).

10–17 contributes to the ATP binding site; it reads GGEGAGKS.

The protein belongs to the thymidylate kinase family.

The catalysed reaction is dTMP + ATP = dTDP + ADP. Its function is as follows. Phosphorylation of dTMP to form dTDP in both de novo and salvage pathways of dTTP synthesis. The chain is Thymidylate kinase from Brucella suis (strain ATCC 23445 / NCTC 10510).